The chain runs to 149 residues: Histone H2A (149 aa).

Residues 1-23 are compositionally biased toward basic residues; the sequence is METAGKAKKGFGGRKGGPRKKSV. Disordered stretches follow at residues 1 to 25 and 127 to 149; these read META…SVTR and KTAE…PKKA. Residues 127-138 are compositionally biased toward basic and acidic residues; sequence KTAEKAAKEPKS. 2 short sequence motifs (SPKK motif) span residues 138 to 141 and 145 to 148; these read SPSK and SPKK.

It belongs to the histone H2A family. The nucleosome is a histone octamer containing two molecules each of H2A, H2B, H3 and H4 assembled in one H3-H4 heterotetramer and two H2A-H2B heterodimers. The octamer wraps approximately 147 bp of DNA.

The protein localises to the nucleus. It localises to the chromosome. Its function is as follows. Core component of nucleosome. Nucleosomes wrap and compact DNA into chromatin, limiting DNA accessibility to the cellular machineries which require DNA as a template. Histones thereby play a central role in transcription regulation, DNA repair, DNA replication and chromosomal stability. DNA accessibility is regulated via a complex set of post-translational modifications of histones, also called histone code, and nucleosome remodeling. The polypeptide is Histone H2A (Petroselinum crispum (Parsley)).